The chain runs to 927 residues: Ribosome-releasing factor 2, mitochondrial (927 aa).

The N-terminal 57 residues, 1-57, are a transit peptide targeting the mitochondrion; the sequence is MVTAPLLGWVAVRPIPRLSKLNTCKYVSSSLQSYKRSVGSCLGKQQSRDFSYSATLT. Residues 64-379 enclose the tr-type G domain; sequence EKTRNIGIIA…AVNNLLPGPS (316 aa). GTP-binding positions include 73–80, 163–167, and 217–220; these read AHIDAGKT, DTPGH, and NKLD.

The protein belongs to the TRAFAC class translation factor GTPase superfamily. Classic translation factor GTPase family. EF-G/EF-2 subfamily.

It is found in the mitochondrion. Mitochondrial GTPase that mediates the disassembly of ribosomes from messenger RNA at the termination of mitochondrial protein biosynthesis. Not involved in the GTP-dependent ribosomal translocation step during translation elongation. The polypeptide is Ribosome-releasing factor 2, mitochondrial (mef2) (Talaromyces marneffei (strain ATCC 18224 / CBS 334.59 / QM 7333) (Penicillium marneffei)).